Reading from the N-terminus, the 180-residue chain is KxDL motif-containing protein 1 (180 aa).

Composition is skewed to polar residues over residues Thr126 to Ile144 and Gln158 to Ile170. Positions Thr126–Asp180 are disordered.

This sequence belongs to the KXD1 family. In terms of assembly, associates with the BLOC-1 complex.

The protein resides in the lysosome membrane. In terms of biological role, as part of a BORC-like complex may play a role in lysosomes movement and localization at the cell periphery. Associated with the cytosolic face of lysosomes, this complex may couple lysosomes to microtubule plus-end-directed kinesin motor. May also be involved in the biogenesis of lysosome-related organelles such as melanosomes. The protein is KxDL motif-containing protein 1 (kxd1) of Xenopus tropicalis (Western clawed frog).